A 448-amino-acid chain; its full sequence is MSENTFIFPATFMWGTSTSSYQIEGGTDEGGRTPSIWDTFCQIPGKVIGGDCGDVACDHFHHFKEDVQLMKQLGFLHYRFSVAWPRIMPAAGIINEEGLLFYEHLLDEIELAGLIPMLTLYHWDLPQWIEDEGGWTQRETIQHFKTYASVIMDRFGERINWWNTINEPYCASILGYGTGEHAPGHENWREAFTAAHHILMCHGIASNLHKEKGLTGKIGITLNMEHVDAASERPEDVAAAIRRDGFINRWFAEPLFNGKYPEDMVEWYGTYLNGLDFVQPGDMELIQQPGDFLGINYYTRSIIRSTNDASLLQVEQVHMEEPVTDMGWEIHPESFYKLLTRIEKDFSKGLPILITENGAAMRDELVNGQIEDTGRHGYIEEHLKACHRFIEEGGQLKGYFVWSFLDNFEWAWGYSKRFGIVHINYETQERTPKQSALWFKQMMAKNGF.

Glu-167 (proton donor) is an active-site residue. Glu-356 (nucleophile) is an active-site residue.

The protein belongs to the glycosyl hydrolase 1 family.

It carries out the reaction Hydrolysis of terminal, non-reducing beta-D-glucosyl residues with release of beta-D-glucose.. The polypeptide is Beta-glucosidase B (bglB) (Paenibacillus polymyxa (Bacillus polymyxa)).